The primary structure comprises 185 residues: ATP synthase subunit b 1 (185 aa).

Residues 4–24 (TLAIALTLATTSPAFAAGGGW) traverse the membrane as a helical segment.

The protein belongs to the ATPase B chain family. As to quaternary structure, F-type ATPases have 2 components, F(1) - the catalytic core - and F(0) - the membrane proton channel. F(1) has five subunits: alpha(3), beta(3), gamma(1), delta(1), epsilon(1). F(0) has three main subunits: a(1), b(2) and c(10-14). The alpha and beta chains form an alternating ring which encloses part of the gamma chain. F(1) is attached to F(0) by a central stalk formed by the gamma and epsilon chains, while a peripheral stalk is formed by the delta and b chains.

The protein localises to the cell inner membrane. Its function is as follows. F(1)F(0) ATP synthase produces ATP from ADP in the presence of a proton or sodium gradient. F-type ATPases consist of two structural domains, F(1) containing the extramembraneous catalytic core and F(0) containing the membrane proton channel, linked together by a central stalk and a peripheral stalk. During catalysis, ATP synthesis in the catalytic domain of F(1) is coupled via a rotary mechanism of the central stalk subunits to proton translocation. Component of the F(0) channel, it forms part of the peripheral stalk, linking F(1) to F(0). The polypeptide is ATP synthase subunit b 1 (Ruegeria sp. (strain TM1040) (Silicibacter sp.)).